The chain runs to 545 residues: MSQSKRILRAIYLSLFFIGIFMIIDDIFFSHKSPSVMDKEIGFNLDKDFDIDNSSIDEDYALNLSANSKDIDVETGIYYATFSTFRGDLISLKLKDHLNLEKEPTEMVKVNMDRESLFYVTLDNLTRDLFSYDRVDDYTHDFKTNFEYNGKFYEYIKRYTFSNKGEYLIKLEIFLNNIDANDNSDIDSYKFVLSSDIEKLSERGKLQYNNYLSQAVYFDTKLRYGKDGLSVISPKWVGSGTKYFEVLVSKENMNVEFKQESKILKAFILNKVGNKNISDTFYIYAGPKDNGYLDLFNKEDLNSFGLSNVEFGMSVEKSLLYFIQVPMQLIMQIFYNVIPNWGLSIMFLTIVVRILIFPLTFKSFRATAELSKLQPKMKEIQVKFKNDPKRLNEEMGKLYREEGVNPLGGCFPILLQLPVFFALYGLVNNFFLLRGASFIPGWIDDLSIGDSIYYFGYKVFMWTDIRILPFIMMVTQLISTIISSNVSFKSLGSQQKILYFGMPIMFFFILYDMPSGLLIYWITTNIFTILQQYYIKMNVSERRNR.

The next 6 helical transmembrane spans lie at 10–30 (AIYL…IFFS), 319–339 (LLYF…NVIP), 341–361 (WGLS…PLTF), 407–427 (LGGC…YGLV), 467–487 (ILPF…SNVS), and 502–522 (MPIM…IYWI).

It belongs to the OXA1/ALB3/YidC family. Type 1 subfamily. Interacts with the Sec translocase complex via SecD. Specifically interacts with transmembrane segments of nascent integral membrane proteins during membrane integration.

It localises to the cell inner membrane. In terms of biological role, required for the insertion and/or proper folding and/or complex formation of integral membrane proteins into the membrane. Involved in integration of membrane proteins that insert both dependently and independently of the Sec translocase complex, as well as at least some lipoproteins. Aids folding of multispanning membrane proteins. The protein is Membrane protein insertase YidC of Borrelia hermsii (strain HS1 / DAH).